Reading from the N-terminus, the 626-residue chain is Probable serine/threonine-protein kinase CCRP1 (626 aa).

The 256-residue stretch at 36–291 (YSKGRMLGKG…LDEILQHPFL (256 aa)) folds into the Protein kinase domain. Residues 42–50 (LGKGGFAKC) and K65 each bind ATP. The residue at position 71 (S71) is a Phosphoserine. The Proton acceptor role is filled by D159. The segment at 399–433 (NFTKTGSWQSNLNGTQSVKGSSRPQTVQQKGDLKS) is disordered. Residues 400 to 427 (FTKTGSWQSNLNGTQSVKGSSRPQTVQQ) show a composition bias toward polar residues. POLO box domains are found at residues 471–554 (WVKK…YLEG) and 574–626 (YVKK…PISP).

Belongs to the protein kinase superfamily. Ser/Thr protein kinase family. CDC5/Polo subfamily. In terms of tissue distribution, embryo.

It catalyses the reaction L-seryl-[protein] + ATP = O-phospho-L-seryl-[protein] + ADP + H(+). It carries out the reaction L-threonyl-[protein] + ATP = O-phospho-L-threonyl-[protein] + ADP + H(+). Functionally, may play a role in the division of some cell types. The chain is Probable serine/threonine-protein kinase CCRP1 (CCRP1) from Zea mays (Maize).